Reading from the N-terminus, the 147-residue chain is Lysozyme C-2 (147 aa).

Residues 1-18 (MKALVILGFLFLSVAVQG) form the signal peptide. The region spanning 19–147 (KVFERCELAR…VSSYVEGCTL (129 aa)) is the C-type lysozyme domain. 4 disulfide bridges follow: Cys-24/Cys-145, Cys-48/Cys-133, Cys-83/Cys-99, and Cys-95/Cys-113. Catalysis depends on residues Glu-53 and Asp-71.

Belongs to the glycosyl hydrolase 22 family. As to quaternary structure, monomer. In terms of tissue distribution, stomach-specific.

It catalyses the reaction Hydrolysis of (1-&gt;4)-beta-linkages between N-acetylmuramic acid and N-acetyl-D-glucosamine residues in a peptidoglycan and between N-acetyl-D-glucosamine residues in chitodextrins.. Lysozymes have primarily a bacteriolytic function; those in tissues and body fluids are associated with the monocyte-macrophage system and enhance the activity of immunoagents. This Bos taurus (Bovine) protein is Lysozyme C-2 (LYZ2).